We begin with the raw amino-acid sequence, 670 residues long: DNA ligase (670 aa).

NAD(+) contacts are provided by residues 32–36 (DAYYD), 81–82 (SL), and Glu-110. The N6-AMP-lysine intermediate role is filled by Lys-112. The NAD(+) site is built by Arg-133, Glu-170, Lys-289, and Lys-313. Residues Cys-407, Cys-410, Cys-425, and Cys-431 each coordinate Zn(2+). A BRCT domain is found at 590–670 (EDELRLKGQT…ELLVFLGLAG (81 aa)).

The protein belongs to the NAD-dependent DNA ligase family. LigA subfamily. Mg(2+) serves as cofactor. It depends on Mn(2+) as a cofactor.

It carries out the reaction NAD(+) + (deoxyribonucleotide)n-3'-hydroxyl + 5'-phospho-(deoxyribonucleotide)m = (deoxyribonucleotide)n+m + AMP + beta-nicotinamide D-nucleotide.. Its function is as follows. DNA ligase that catalyzes the formation of phosphodiester linkages between 5'-phosphoryl and 3'-hydroxyl groups in double-stranded DNA using NAD as a coenzyme and as the energy source for the reaction. It is essential for DNA replication and repair of damaged DNA. In Shewanella denitrificans (strain OS217 / ATCC BAA-1090 / DSM 15013), this protein is DNA ligase.